The following is a 253-amino-acid chain: Imidazole glycerol phosphate synthase subunit HisF (253 aa).

Active-site residues include D11 and D130.

It belongs to the HisA/HisF family. In terms of assembly, heterodimer of HisH and HisF.

Its subcellular location is the cytoplasm. It catalyses the reaction 5-[(5-phospho-1-deoxy-D-ribulos-1-ylimino)methylamino]-1-(5-phospho-beta-D-ribosyl)imidazole-4-carboxamide + L-glutamine = D-erythro-1-(imidazol-4-yl)glycerol 3-phosphate + 5-amino-1-(5-phospho-beta-D-ribosyl)imidazole-4-carboxamide + L-glutamate + H(+). It participates in amino-acid biosynthesis; L-histidine biosynthesis; L-histidine from 5-phospho-alpha-D-ribose 1-diphosphate: step 5/9. In terms of biological role, IGPS catalyzes the conversion of PRFAR and glutamine to IGP, AICAR and glutamate. The HisF subunit catalyzes the cyclization activity that produces IGP and AICAR from PRFAR using the ammonia provided by the HisH subunit. The chain is Imidazole glycerol phosphate synthase subunit HisF from Clostridium botulinum (strain Langeland / NCTC 10281 / Type F).